The sequence spans 139 residues: Large ribosomal subunit protein uL16 (139 aa).

A compositionally biased stretch (basic residues) spans 1–16; that stretch reads MLIPKRTKYRKQHRPV. The segment at 1-22 is disordered; the sequence is MLIPKRTKYRKQHRPVRSGMSK.

It belongs to the universal ribosomal protein uL16 family. In terms of assembly, part of the 50S ribosomal subunit.

Functionally, binds 23S rRNA and is also seen to make contacts with the A and possibly P site tRNAs. The sequence is that of Large ribosomal subunit protein uL16 from Bifidobacterium longum (strain DJO10A).